We begin with the raw amino-acid sequence, 354 residues long: 3-dehydroquinate synthase (354 aa).

Residues 100 to 104, 124 to 125, Lys136, Lys145, and 163 to 166 contribute to the NAD(+) site; these read GATGD, TT, and FLKT. 3 residues coordinate Zn(2+): Glu178, His242, and His256.

It belongs to the sugar phosphate cyclases superfamily. Dehydroquinate synthase family. The cofactor is Co(2+). Zn(2+) is required as a cofactor. NAD(+) serves as cofactor.

It localises to the cytoplasm. The catalysed reaction is 7-phospho-2-dehydro-3-deoxy-D-arabino-heptonate = 3-dehydroquinate + phosphate. It participates in metabolic intermediate biosynthesis; chorismate biosynthesis; chorismate from D-erythrose 4-phosphate and phosphoenolpyruvate: step 2/7. Its function is as follows. Catalyzes the conversion of 3-deoxy-D-arabino-heptulosonate 7-phosphate (DAHP) to dehydroquinate (DHQ). In Staphylococcus aureus (strain NCTC 8325 / PS 47), this protein is 3-dehydroquinate synthase.